We begin with the raw amino-acid sequence, 434 residues long: Protein HEAT INTOLERANT 4 (434 aa).

The Nuclear localization signal 1 motif lies at methionine 1–lysine 8. The segment covering methionine 1 to arginine 15 has biased composition (basic residues). The segment at methionine 1 to alanine 131 is disordered. Basic and acidic residues predominate over residues glutamate 30–asparagine 53. The span at glycine 54–glutamate 82 shows a compositional bias: acidic residues. Basic and acidic residues predominate over residues aspartate 83–proline 98. Positions glutamate 95–arginine 102 match the Nuclear localization signal 2 motif. A compositionally biased stretch (basic residues) spans valine 99–threonine 110. A compositionally biased stretch (basic and acidic residues) spans lysine 111–proline 122. Positions valine 363–glutamine 394 form a coiled coil. The short motif at alanine 370–alanine 377 is the Nuclear localization signal 3 element.

It is found in the nucleus. The protein resides in the nucleolus. In terms of biological role, essential protein required for basal thermotolerance, especially during heat-induced chromocentre decondensation, thus regulating transcriptional gene silencing (TGS). The polypeptide is Protein HEAT INTOLERANT 4 (Arabidopsis thaliana (Mouse-ear cress)).